Here is a 784-residue protein sequence, read N- to C-terminus: LPS-assembly protein LptD (784 aa).

Positions 1 to 24 (MKKRIPTLLATMIATALYSQQGLA) are cleaved as a signal peptide. Cystine bridges form between C31–C724 and C173–C725.

Belongs to the LptD family. In terms of assembly, component of the lipopolysaccharide transport and assembly complex. Interacts with LptE and LptA. Post-translationally, contains two intramolecular disulfide bonds.

It is found in the cell outer membrane. Functionally, together with LptE, is involved in the assembly of lipopolysaccharide (LPS) at the surface of the outer membrane. The sequence is that of LPS-assembly protein LptD from Escherichia coli O6:K15:H31 (strain 536 / UPEC).